Consider the following 686-residue polypeptide: Glycine--tRNA ligase beta subunit (686 aa).

The disordered stretch occupies residues Ala-65–Thr-99. Positions Ser-67–Glu-84 are enriched in basic and acidic residues.

Belongs to the class-II aminoacyl-tRNA synthetase family. In terms of assembly, tetramer of two alpha and two beta subunits.

Its subcellular location is the cytoplasm. The catalysed reaction is tRNA(Gly) + glycine + ATP = glycyl-tRNA(Gly) + AMP + diphosphate. This is Glycine--tRNA ligase beta subunit from Leuconostoc citreum (strain KM20).